A 360-amino-acid polypeptide reads, in one-letter code: Magnesium-protoporphyrin IX monomethyl ester [oxidative] cyclase (360 aa).

The interval Met1–Lys20 is disordered.

Belongs to the AcsF family. Fe cation is required as a cofactor.

It carries out the reaction Mg-protoporphyrin IX 13-monomethyl ester + 3 NADPH + 3 O2 + 2 H(+) = 3,8-divinyl protochlorophyllide a + 3 NADP(+) + 5 H2O. It participates in porphyrin-containing compound metabolism; chlorophyll biosynthesis (light-independent). Functionally, catalyzes the formation of the isocyclic ring in chlorophyll biosynthesis. Mediates the cyclase reaction, which results in the formation of divinylprotochlorophyllide (Pchlide) characteristic of all chlorophylls from magnesium-protoporphyrin IX 13-monomethyl ester (MgPMME). The sequence is that of Magnesium-protoporphyrin IX monomethyl ester [oxidative] cyclase from Synechococcus sp. (strain RCC307).